Here is a 439-residue protein sequence, read N- to C-terminus: Arginine biosynthesis bifunctional protein ArgJ, mitochondrial (439 aa).

The substrate site is built by threonine 175, lysine 201, threonine 212, glutamate 301, asparagine 434, and serine 439. The active-site Nucleophile is the threonine 212.

Belongs to the ArgJ family. As to quaternary structure, heterodimer of an alpha and a beta chain. The alpha and beta chains are autoproteolytically processed from a single precursor protein within the mitochondrion.

It is found in the mitochondrion matrix. It catalyses the reaction N(2)-acetyl-L-ornithine + L-glutamate = N-acetyl-L-glutamate + L-ornithine. The catalysed reaction is L-glutamate + acetyl-CoA = N-acetyl-L-glutamate + CoA + H(+). Its pathway is amino-acid biosynthesis; L-arginine biosynthesis; L-ornithine and N-acetyl-L-glutamate from L-glutamate and N(2)-acetyl-L-ornithine (cyclic): step 1/1. The protein operates within amino-acid biosynthesis; L-arginine biosynthesis; N(2)-acetyl-L-ornithine from L-glutamate: step 1/4. Its function is as follows. Catalyzes two activities which are involved in the cyclic version of arginine biosynthesis: the synthesis of acetylglutamate from glutamate and acetyl-CoA, and of ornithine by transacetylation between acetylornithine and glutamate. This is Arginine biosynthesis bifunctional protein ArgJ, mitochondrial from Candida albicans (strain WO-1) (Yeast).